The chain runs to 114 residues: UPF0342 protein SERP1381 (114 aa).

Belongs to the UPF0342 family.

This chain is UPF0342 protein SERP1381, found in Staphylococcus epidermidis (strain ATCC 35984 / DSM 28319 / BCRC 17069 / CCUG 31568 / BM 3577 / RP62A).